A 243-amino-acid chain; its full sequence is MTYSIRIADLPLTERPRERLLSLGAQSLSNAELLAILLATGQGKGKLSAVGLGQHILKELSQHKRDPLDVLRDMSPQELMNIPGIGPAKATTILAAIELGKRAFQLRPMEKVEINDPVSAVAALSHDLMWQNQERFAIVLLNVKNQIIGTKLISIGTATETLVHPREIFREVLKQGATKLIIGHNHPSGNVAPSQEDIDLTEQLLKAATFLNFPLLDHLILGNGNHQSLRTVTDLWIRYPQEG.

The 124-residue stretch at 112–235 (VEINDPVSAV…HQSLRTVTDL (124 aa)) folds into the MPN domain. Zn(2+) contacts are provided by His184, His186, and Asp197. The short motif at 184-197 (HNHPSGNVAPSQED) is the JAMM motif element.

This sequence belongs to the UPF0758 family.

This is UPF0758 protein PCC7424_2073 from Gloeothece citriformis (strain PCC 7424) (Cyanothece sp. (strain PCC 7424)).